The chain runs to 79 residues: Sec-independent protein translocase protein TatA (79 aa).

A helical membrane pass occupies residues 1 to 21; it reads MGSLSIWHWLIVLLIVALVFG. The disordered stretch occupies residues 46–79; the sequence is ADAPAAEAQQRELPRNGAVDVEAKEKTPRSGDYR. Over residues 66 to 79 the composition is skewed to basic and acidic residues; the sequence is VEAKEKTPRSGDYR.

Belongs to the TatA/E family. The Tat system comprises two distinct complexes: a TatABC complex, containing multiple copies of TatA, TatB and TatC subunits, and a separate TatA complex, containing only TatA subunits. Substrates initially bind to the TatABC complex, which probably triggers association of the separate TatA complex to form the active translocon.

It is found in the cell inner membrane. Functionally, part of the twin-arginine translocation (Tat) system that transports large folded proteins containing a characteristic twin-arginine motif in their signal peptide across membranes. TatA could form the protein-conducting channel of the Tat system. The sequence is that of Sec-independent protein translocase protein TatA from Paraburkholderia phytofirmans (strain DSM 17436 / LMG 22146 / PsJN) (Burkholderia phytofirmans).